We begin with the raw amino-acid sequence, 330 residues long: MLSSATFKLQPTATGLTENHRLRLFSGSSNVQLSQEVARYLGMDLGPMIRKRFADGELYVQIQESIRGCDVYLIQPCCQPVNDHLMELLIMVDACRRASARQVTAVIPYYGYARADRKTAGRESITAKLVANLITQAGANRVLAMDLHAAQIQGYFDIPFDHVYGSPVLLDYLTSKQLHDIVVVSPDVGGVARARAFAKKLNDAPLAIIDKRRQAHNVAEVLNVIGDVKGKTAVLVDDMIDTGGTIAAGAKLLREEGARQVYACATHAVFSPPAVERLSSGLFEEVIVTNTIPIPESDRFPQLVVLSVANLLGETIWRIHEDTSISSMFR.

55 to 57 contacts ATP; that stretch reads DGE. 2 residues coordinate Mg(2+): His-148 and Asp-187. The active site involves Lys-211. Residues Arg-213, Asp-237, and 241 to 245 each bind D-ribose 5-phosphate; that span reads DTGGT.

It belongs to the ribose-phosphate pyrophosphokinase family. Class I subfamily. Homohexamer. The cofactor is Mg(2+).

It is found in the cytoplasm. It carries out the reaction D-ribose 5-phosphate + ATP = 5-phospho-alpha-D-ribose 1-diphosphate + AMP + H(+). Its pathway is metabolic intermediate biosynthesis; 5-phospho-alpha-D-ribose 1-diphosphate biosynthesis; 5-phospho-alpha-D-ribose 1-diphosphate from D-ribose 5-phosphate (route I): step 1/1. Its function is as follows. Involved in the biosynthesis of the central metabolite phospho-alpha-D-ribosyl-1-pyrophosphate (PRPP) via the transfer of pyrophosphoryl group from ATP to 1-hydroxyl of ribose-5-phosphate (Rib-5-P). In Nostoc sp. (strain PCC 7120 / SAG 25.82 / UTEX 2576), this protein is Ribose-phosphate pyrophosphokinase.